Here is a 405-residue protein sequence, read N- to C-terminus: Indoleamine 2,3-dioxygenase acdA (405 aa).

H312 serves as a coordination point for heme.

Belongs to the indoleamine 2,3-dioxygenase family. Heme serves as cofactor.

The catalysed reaction is L-tryptophan + O2 = N-formyl-L-kynurenine. It functions in the pathway secondary metabolite biosynthesis. Indoleamine 2,3-dioxygenase; part of the gene cluster that mediates the biosynthesis of aspcandine, a pyrrolobenzazepine alkaloid. Initially, the indoleamine 2,3-dioxygenase acdA accepts L-tryptophan and performs the oxidative opening of the indole ring to yield N'-formyl-L-kynurenine, which undergoes the spontaneous deformylation reaction to provide L-kynurenine. The kynurenine 3-monooxygenase acdD then hydroxylates L-kynurenine to afford 3-hydroxy-L-kynurenine. 3-hydroxy-L-kynurenine is activated by the A domain of the NRPS-PKS acdB and subsequently loaded onto the enzyme. The KS domain conducts the decarboxylative condensation of the 3-hydroxy-L-kynurenyl and malonyl moieties, and subsequent nucleophilic attacks by the two amino groups would occur nonenzymatically at two distinct positions, achieving the chain release and the construction of the tricyclic system. Finally, a dehydration reaction completes the biosynthesis to yield aspcandine. The chain is Indoleamine 2,3-dioxygenase acdA from Aspergillus candidus.